Here is a 255-residue protein sequence, read N- to C-terminus: Small ribosomal subunit protein uS2 (255 aa).

It belongs to the universal ribosomal protein uS2 family.

The chain is Small ribosomal subunit protein uS2 from Streptococcus uberis (strain ATCC BAA-854 / 0140J).